Here is a 137-residue protein sequence, read N- to C-terminus: Large ribosomal subunit protein uL16 (137 aa).

It belongs to the universal ribosomal protein uL16 family. In terms of assembly, part of the 50S ribosomal subunit.

In terms of biological role, binds 23S rRNA and is also seen to make contacts with the A and possibly P site tRNAs. This Streptococcus pneumoniae serotype 2 (strain D39 / NCTC 7466) protein is Large ribosomal subunit protein uL16.